Reading from the N-terminus, the 287-residue chain is Beta-lactamase GES-1 (287 aa).

Positions 1–18 (MRFIHALLLAGIAHSAYA) are cleaved as a signal peptide. Residues Cys63 and Cys233 are joined by a disulfide bond. Ser64 (nucleophile; acyl-ester intermediate) is an active-site residue. A beta-lactam contacts are provided by Lys67, Ser125, Glu161, and Thr232.

The protein belongs to the class-A beta-lactamase family. Monomer. May form dimers.

It carries out the reaction a beta-lactam + H2O = a substituted beta-amino acid. Its activity is regulated as follows. Inhibited by the beta-lactamase-blocking agents clavulanic acid, tazobactam, sulbactam and tazobactam and the carbapenem, imipenem. Inhibition by imipenem may involve Gly-165. Functionally, extended-spectrum beta-lactamase (ESBL) which confers resistance to penicillins, as well as first, second, third and fourth-generation cephalosporins. Has ceftazidime-hydrolyzing activity. Inactive against the carbapenems, imipenem, meropenem, ertapenem and doripenem. However, weak hydrolytic activity with respect to imipenem has also been reported. The protein is Beta-lactamase GES-1 of Klebsiella pneumoniae.